Reading from the N-terminus, the 230-residue chain is PKHD-type hydroxylase Xfasm12_1709 (230 aa).

Positions 78–182 (RTLPPRFNRY…RIASFFWVQS (105 aa)) constitute a Fe2OG dioxygenase domain. Residues His-96, Asp-98, and His-163 each contribute to the Fe cation site. Residue Arg-173 coordinates 2-oxoglutarate.

Fe(2+) is required as a cofactor. It depends on L-ascorbate as a cofactor.

The protein is PKHD-type hydroxylase Xfasm12_1709 of Xylella fastidiosa (strain M12).